We begin with the raw amino-acid sequence, 692 residues long: Elongation factor G (692 aa).

The 275-residue stretch at 9 to 283 folds into the tr-type G domain; the sequence is DKLRNIGIMA…AVIDYLPSPL (275 aa). Residues 18–25, 82–86, and 136–139 contribute to the GTP site; these read AHIDAGKT, DTPGH, and NKMD.

The protein belongs to the TRAFAC class translation factor GTPase superfamily. Classic translation factor GTPase family. EF-G/EF-2 subfamily.

It is found in the cytoplasm. Catalyzes the GTP-dependent ribosomal translocation step during translation elongation. During this step, the ribosome changes from the pre-translocational (PRE) to the post-translocational (POST) state as the newly formed A-site-bound peptidyl-tRNA and P-site-bound deacylated tRNA move to the P and E sites, respectively. Catalyzes the coordinated movement of the two tRNA molecules, the mRNA and conformational changes in the ribosome. This Thermotoga maritima (strain ATCC 43589 / DSM 3109 / JCM 10099 / NBRC 100826 / MSB8) protein is Elongation factor G (fusA).